Here is a 497-residue protein sequence, read N- to C-terminus: 3-octaprenyl-4-hydroxybenzoate carboxy-lyase (497 aa).

N175 lines the Mn(2+) pocket. Prenylated FMN contacts are provided by residues 178–180 (IYR), 192–194 (RWL), and 197–198 (RG). E241 is a binding site for Mn(2+). D290 (proton donor) is an active-site residue.

The protein belongs to the UbiD family. Homohexamer. Prenylated FMN serves as cofactor. Mn(2+) is required as a cofactor.

It is found in the cell membrane. The catalysed reaction is a 4-hydroxy-3-(all-trans-polyprenyl)benzoate + H(+) = a 2-(all-trans-polyprenyl)phenol + CO2. It functions in the pathway cofactor biosynthesis; ubiquinone biosynthesis. Its function is as follows. Catalyzes the decarboxylation of 3-octaprenyl-4-hydroxy benzoate to 2-octaprenylphenol, an intermediate step in ubiquinone biosynthesis. This chain is 3-octaprenyl-4-hydroxybenzoate carboxy-lyase, found in Shigella flexneri.